Consider the following 36-residue polypeptide: DNA binding protein ORF8 (36 aa).

This sequence belongs to the microviridae J protein family.

The protein resides in the virion. Its subcellular location is the host cytoplasm. Its function is as follows. Mediates ssDNA packaging into virion, it locates to the internal surface of the capsid. Additionally, plays a role in viral attachment to the host cell. The polypeptide is DNA binding protein ORF8 (Chlamydia phage 1 (Bacteriophage Chp1)).